The sequence spans 370 residues: Protein PAM71, chloroplastic (370 aa).

The interval 1-38 is disordered; that stretch reads MLSLNLSESLRIPFQNPRPPKSDFSSTSSSPSSSSRRC. A chloroplast-targeting transit peptide spans 1-73; it reads MLSLNLSESL…RNESQQLGFR (73 aa). Residues 22–38 are compositionally biased toward low complexity; the sequence is SDFSSTSSSPSSSSRRC. The Stromal portion of the chain corresponds to 74-113; the sequence is CFQRNDAACYLEKAESEEHDRNLDVLVESSIAHSRREIQR. A helical transmembrane segment spans residues 114-134; it reads VLMFLAVSGSVALLGTDPAFA. Residues 135-161 lie on the Lumenal, thylakoid side of the membrane; sequence ASSIPNVTQSLVTSFGDLGDISSGFAS. A helical membrane pass occupies residues 162–182; that stretch reads AFLLIFFSELGDKTFFIAALL. Residues 183-188 lie on the Stromal side of the membrane; the sequence is AARNSA. A helical membrane pass occupies residues 189–209; that stretch reads ATVFVGTFGALGIMTIISVVL. Residues 210 to 228 lie on the Lumenal, thylakoid side of the membrane; the sequence is GRTFHYVDEVLPFRFGGTD. Residues 229–249 form a helical membrane-spanning segment; sequence LPIDDIAAVCLLVYFGVSTLL. The Stromal portion of the chain corresponds to 250–275; that stretch reads DAVSDEGKADEEQKEAELAVSELSGN. A helical membrane pass occupies residues 276 to 296; it reads GAGIVAAANTIISTFALVFVA. The Lumenal, thylakoid segment spans residues 297–315; it reads EWGDKSFFSTIALAAASSP. The helical transmembrane segment at 316-336 threads the bilayer; it reads LGVIAGALAGHGAATLLAVLG. The Stromal segment spans residues 337-348; that stretch reads GSLLGNFLSEKA. Residues 349-369 form a helical membrane-spanning segment; it reads IAYVGGVLFLVFAAVTVAEIV. Thr370 is a topological domain (lumenal, thylakoid).

The protein belongs to the GDT1 family. In terms of assembly, homodimer.

Its subcellular location is the plastid. It localises to the chloroplast membrane. It is found in the thylakoid. Mn(2+)/H(+) exchanger, which transport Mn(2+)from the chloroplast stroma into the acidic thylakoid lumen. Might be a chloroplast-localized Ca(2+)/H(+) antiporter. Regulates Ca(2+), Mn(2+) and pH homeostasis. Required for chloroplast development. This chain is Protein PAM71, chloroplastic, found in Arabidopsis thaliana (Mouse-ear cress).